A 210-amino-acid chain; its full sequence is 7-carboxy-7-deazaguanine synthase (210 aa).

Substrate is bound by residues 25-27 and Arg-40; that span reads IQG. In terms of domain architecture, Radical SAM core spans 31–210; sequence HTGTAAYFIR…LQTHKYLNIP (180 aa). Cys-44, Cys-48, and Cys-51 together coordinate [4Fe-4S] cluster. Thr-84 serves as a coordination point for substrate. Residues Gly-86 and 127-129 contribute to the S-adenosyl-L-methionine site; that span reads SPK. Residue Pro-210 coordinates substrate.

The protein belongs to the radical SAM superfamily. 7-carboxy-7-deazaguanine synthase family. Homodimer. [4Fe-4S] cluster serves as cofactor. It depends on S-adenosyl-L-methionine as a cofactor. Requires Mg(2+) as cofactor.

It carries out the reaction 6-carboxy-5,6,7,8-tetrahydropterin + H(+) = 7-carboxy-7-deazaguanine + NH4(+). The protein operates within purine metabolism; 7-cyano-7-deazaguanine biosynthesis. In terms of biological role, catalyzes the complex heterocyclic radical-mediated conversion of 6-carboxy-5,6,7,8-tetrahydropterin (CPH4) to 7-carboxy-7-deazaguanine (CDG), a step common to the biosynthetic pathways of all 7-deazapurine-containing compounds. This Flavobacterium psychrophilum (strain ATCC 49511 / DSM 21280 / CIP 103535 / JIP02/86) protein is 7-carboxy-7-deazaguanine synthase.